The sequence spans 343 residues: Protein RecA (343 aa).

Residue 66–73 coordinates ATP; the sequence is GPESSGKT.

This sequence belongs to the RecA family.

Its subcellular location is the cytoplasm. In terms of biological role, can catalyze the hydrolysis of ATP in the presence of single-stranded DNA, the ATP-dependent uptake of single-stranded DNA by duplex DNA, and the ATP-dependent hybridization of homologous single-stranded DNAs. It interacts with LexA causing its activation and leading to its autocatalytic cleavage. This chain is Protein RecA, found in Rickettsia massiliae (strain Mtu5).